A 233-amino-acid chain; its full sequence is MKFYALIPAAGSGSRMGGAIEKQYMDVNSVPMIAHAMMVLAREPRIARIFVVLSPTDKRWNNYEWQGWEERIEVLRCGGGTRAETVLNALDAIAEVCDPADWVLVHDAARPCLPDEMLGKLLDEVADDPVGGLLAVPVADTLKRAAGDTSSGTRVEATVPRAGLWQAQTPQMFRHGTLTEALRAAGSDMTDEASAIEKLGLQPQLVESDSRNLKVTYPQDLELASLILGKMNA.

It belongs to the IspD/TarI cytidylyltransferase family. IspD subfamily.

The catalysed reaction is 2-C-methyl-D-erythritol 4-phosphate + CTP + H(+) = 4-CDP-2-C-methyl-D-erythritol + diphosphate. It participates in isoprenoid biosynthesis; isopentenyl diphosphate biosynthesis via DXP pathway; isopentenyl diphosphate from 1-deoxy-D-xylulose 5-phosphate: step 2/6. Its function is as follows. Catalyzes the formation of 4-diphosphocytidyl-2-C-methyl-D-erythritol from CTP and 2-C-methyl-D-erythritol 4-phosphate (MEP). The chain is 2-C-methyl-D-erythritol 4-phosphate cytidylyltransferase from Thiobacillus denitrificans (strain ATCC 25259 / T1).